The sequence spans 489 residues: Endoglucanase 4 (489 aa).

An N-terminal signal peptide occupies residues 1 to 25 (MAGKSFMTPAIMLAMLLLISPETYA). Asp81 serves as the catalytic Nucleophile. The active site involves His409. Asn453 is a glycosylation site (N-linked (GlcNAc...) asparagine). Catalysis depends on residues Asp460 and Glu469.

It belongs to the glycosyl hydrolase 9 (cellulase E) family.

It is found in the secreted. The catalysed reaction is Endohydrolysis of (1-&gt;4)-beta-D-glucosidic linkages in cellulose, lichenin and cereal beta-D-glucans.. The sequence is that of Endoglucanase 4 from Arabidopsis thaliana (Mouse-ear cress).